We begin with the raw amino-acid sequence, 153 residues long: uncharacterized protein (153 aa).

A2 is subject to N-acetylalanine.

This is an uncharacterized protein from Arabidopsis thaliana (Mouse-ear cress).